The sequence spans 437 residues: tRNA(Ile2) 2-agmatinylcytidine synthetase TiaS (437 aa).

Belongs to the TiaS family.

It localises to the cytoplasm. The enzyme catalyses cytidine(34) in tRNA(Ile2) + agmatine + ATP + H2O = 2-agmatinylcytidine(34) in tRNA(Ile2) + AMP + 2 phosphate + 2 H(+). Functionally, ATP-dependent agmatine transferase that catalyzes the formation of 2-agmatinylcytidine (agm2C) at the wobble position (C34) of tRNA(Ile2), converting the codon specificity from AUG to AUA. This is tRNA(Ile2) 2-agmatinylcytidine synthetase TiaS from Acidilobus saccharovorans (strain DSM 16705 / JCM 18335 / VKM B-2471 / 345-15).